We begin with the raw amino-acid sequence, 368 residues long: Phosphoribosylformylglycinamidine cyclo-ligase (368 aa).

This sequence belongs to the AIR synthase family.

The protein localises to the cytoplasm. The catalysed reaction is 2-formamido-N(1)-(5-O-phospho-beta-D-ribosyl)acetamidine + ATP = 5-amino-1-(5-phospho-beta-D-ribosyl)imidazole + ADP + phosphate + H(+). The protein operates within purine metabolism; IMP biosynthesis via de novo pathway; 5-amino-1-(5-phospho-D-ribosyl)imidazole from N(2)-formyl-N(1)-(5-phospho-D-ribosyl)glycinamide: step 2/2. The polypeptide is Phosphoribosylformylglycinamidine cyclo-ligase (Novosphingobium aromaticivorans (strain ATCC 700278 / DSM 12444 / CCUG 56034 / CIP 105152 / NBRC 16084 / F199)).